The chain runs to 206 residues: Thymidylate kinase (206 aa).

11–18 (GIDGAGKT) is a binding site for ATP.

The protein belongs to the thymidylate kinase family.

It catalyses the reaction dTMP + ATP = dTDP + ADP. Phosphorylation of dTMP to form dTDP in both de novo and salvage pathways of dTTP synthesis. The chain is Thymidylate kinase from Paraburkholderia phytofirmans (strain DSM 17436 / LMG 22146 / PsJN) (Burkholderia phytofirmans).